The sequence spans 282 residues: DegV domain-containing protein SpyM3_0586 (282 aa).

The region spanning 3–280 (LAVITDSTAT…EGAIAFGVTP (278 aa)) is the DegV domain. Hexadecanoate-binding residues include T61 and S94.

Its function is as follows. May bind long-chain fatty acids, such as palmitate, and may play a role in lipid transport or fatty acid metabolism. This chain is DegV domain-containing protein SpyM3_0586, found in Streptococcus pyogenes serotype M3 (strain ATCC BAA-595 / MGAS315).